Here is a 271-residue protein sequence, read N- to C-terminus: HTH-type transcriptional repressor AllR (271 aa).

Residues 21-83 (AQALERGIAI…SQLGWWHIGL (63 aa)) form the HTH iclR-type domain. The segment at residues 43–62 (VSDISLNLDLPLSTTFRLLK) is a DNA-binding region (H-T-H motif). The IclR-ED domain occupies 98–267 (VLSVAGPFMR…ARDISTALGL (170 aa)). Glyoxylate is bound by residues 154-156 (SGA), D207, C217, and 234-236 (SIS).

Functionally, negative regulator of allantoin and glyoxylate utilization operons. Binds to the gcl promoter and to the allS-allA intergenic region. This Escherichia coli O6:H1 (strain CFT073 / ATCC 700928 / UPEC) protein is HTH-type transcriptional repressor AllR (allR).